We begin with the raw amino-acid sequence, 304 residues long: Aspartate carbamoyltransferase catalytic subunit (304 aa).

Residues R53 and T54 each contribute to the carbamoyl phosphate site. K82 contacts L-aspartate. Positions 103, 131, and 134 each coordinate carbamoyl phosphate. L-aspartate-binding residues include R163 and R224. Carbamoyl phosphate is bound by residues L263 and P264.

Belongs to the aspartate/ornithine carbamoyltransferase superfamily. ATCase family. In terms of assembly, heterooligomer of catalytic and regulatory chains.

It carries out the reaction carbamoyl phosphate + L-aspartate = N-carbamoyl-L-aspartate + phosphate + H(+). Its pathway is pyrimidine metabolism; UMP biosynthesis via de novo pathway; (S)-dihydroorotate from bicarbonate: step 2/3. Catalyzes the condensation of carbamoyl phosphate and aspartate to form carbamoyl aspartate and inorganic phosphate, the committed step in the de novo pyrimidine nucleotide biosynthesis pathway. This is Aspartate carbamoyltransferase catalytic subunit from Haloarcula marismortui (strain ATCC 43049 / DSM 3752 / JCM 8966 / VKM B-1809) (Halobacterium marismortui).